The primary structure comprises 80 residues: Acyl carrier protein (80 aa).

The Carrier domain occupies 2-77; it reads SDTLKRLQKI…DALNYIENKI (76 aa). Position 37 is an O-(pantetheine 4'-phosphoryl)serine (Ser37).

This sequence belongs to the acyl carrier protein (ACP) family. Post-translationally, 4'-phosphopantetheine is transferred from CoA to a specific serine of apo-ACP by AcpS. This modification is essential for activity because fatty acids are bound in thioester linkage to the sulfhydryl of the prosthetic group.

The protein resides in the plastid. Its subcellular location is the chloroplast. It participates in lipid metabolism; fatty acid biosynthesis. Functionally, carrier of the growing fatty acid chain in fatty acid biosynthesis. This chain is Acyl carrier protein, found in Cylindrotheca sp. (strain N1) (Marine diatom).